The following is a 145-amino-acid chain: Large ribosomal subunit protein bL9 (145 aa).

The protein belongs to the bacterial ribosomal protein bL9 family.

Functionally, binds to the 23S rRNA. In Mesomycoplasma hyopneumoniae (strain 232) (Mycoplasma hyopneumoniae), this protein is Large ribosomal subunit protein bL9.